Here is a 903-residue protein sequence, read N- to C-terminus: Ras and Rab interactor 2 (903 aa).

The disordered stretch occupies residues 44 to 73; it reads NGLEPSETHSMVRHKDGGYSEDKDGKTCPR. Positions 56–73 are enriched in basic and acidic residues; it reads RHKDGGYSEDKDGKTCPR. Residues 97-190 enclose the SH2 domain; it reads WLQLSLSEEE…VLPFTLKLPY (94 aa). Disordered stretches follow at residues 282 to 455 and 471 to 491; these read QDLS…EFDR and EDYEGESDQETMAPPIKSKKK. Residues 306–315 are compositionally biased toward pro residues; that stretch reads SPPPRPPPPA. Polar residues predominate over residues 318-338; that stretch reads SLHTSPGLSRTEPQTSMPETV. Ser-366 is subject to Phosphoserine. Positions 419 to 431 are enriched in pro residues; sequence APPPGSESQPPPC. The segment covering 439 to 450 has biased composition (low complexity); sequence SDMSLSTSSSDS. The tract at residues 506–775 is interaction with RAB5B; it reads LRKMSGVFSS…ARLLSSEARD (270 aa). Ser-510 is subject to Phosphoserine. Phosphothreonine is present on Thr-518. The VPS9 domain maps to 627-766; sequence DGSWKQLKEN…IKNFQEEQAA (140 aa). The region spanning 796-887 is the Ras-associating domain; it reads FQNYLRVAFQ…FHFVYKRIKS (92 aa).

This sequence belongs to the RIN (Ras interaction/interference) family. As to quaternary structure, homotetramer; probably composed of anti-parallel linkage of two parallel dimers. Interacts with Ras. Interacts with RAB5B, with a much higher affinity for GTP-bound activated RAB5B. Does not interact with other members of the Rab family.

The protein resides in the cytoplasm. In terms of biological role, ras effector protein. May function as an upstream activator and/or downstream effector for RAB5B in endocytic pathway. May function as a guanine nucleotide exchange (GEF) of RAB5B, required for activating the RAB5 proteins by exchanging bound GDP for free GTP. This Mus musculus (Mouse) protein is Ras and Rab interactor 2 (Rin2).